The sequence spans 200 residues: Alpha-amylase/subtilisin inhibitor (200 aa).

The N-terminal stretch at 1–22 (MVSLRLPLILLSLLAISFSCSA) is a signal peptide. Cystine bridges form between cysteine 63–cysteine 112 and cysteine 162–cysteine 166.

Belongs to the protease inhibitor I3 (leguminous Kunitz-type inhibitor) family.

This protein inhibits independently subtilisin and T.castaneum alpha-amylase but not barley alpha-amylase. The protein is Alpha-amylase/subtilisin inhibitor (RASI) of Oryza sativa subsp. japonica (Rice).